Reading from the N-terminus, the 156-residue chain is PopC secretion inhibitor (156 aa).

Residues 1–89 (MNPGSAPWER…PVRSRAEVHQ (89 aa)) are disordered. Residues 8 to 28 (WERRTRERMRAMSRKNGEWGD) show a composition bias toward basic and acidic residues.

In terms of assembly, interacts with PopC in non-starving cells.

It is found in the cytoplasm. Its activity is regulated as follows. In response to starvation, RelA is activated resulting in the accumulation of (p)ppGpp, which causes the degradation of PopD in an FtsH(D)-dependent manner, thereby releasing pre-formed PopC for secretion. Its function is as follows. Inhibitor of protease PopC. In non-starving cells, forms a cytoplasmic complex with PopC and inhibits PopC secretion and activity. The polypeptide is PopC secretion inhibitor (Myxococcus xanthus (strain DK1622)).